The primary structure comprises 156 residues: Ribosomal RNA large subunit methyltransferase H (156 aa).

Residues Leu73, Gly104, and 123–128 (LSPLTL) each bind S-adenosyl-L-methionine.

It belongs to the RNA methyltransferase RlmH family. Homodimer.

Its subcellular location is the cytoplasm. It carries out the reaction pseudouridine(1915) in 23S rRNA + S-adenosyl-L-methionine = N(3)-methylpseudouridine(1915) in 23S rRNA + S-adenosyl-L-homocysteine + H(+). Its function is as follows. Specifically methylates the pseudouridine at position 1915 (m3Psi1915) in 23S rRNA. In Aliivibrio fischeri (strain ATCC 700601 / ES114) (Vibrio fischeri), this protein is Ribosomal RNA large subunit methyltransferase H.